A 608-amino-acid chain; its full sequence is Thiol:disulfide interchange protein DsbD (608 aa).

A signal peptide spans 1-22 (MKNLLSLCFLMLAAFTLNPAAA). Cysteines 135 and 141 form a disulfide. Polar residues predominate over residues 161-173 (SAPSSDAAQQTNE). The tract at residues 161 to 180 (SAPSSDAAQQTNEGEVKKSE) is disordered. The next 8 helical transmembrane spans lie at 194–214 (LLTLIAFFVGGLLLSFTPCVF), 241–261 (FFYVQGMAITYTLLGVVVAMA), 273–293 (IVLIGLSILFIFLALSMFGVF), 314–334 (GGSITGVLMMGVISGLVASPC), 352–372 (VVLGASALYALSLGMGLPLLI), 387–407 (WMNIIKNIFGLLLLAVPVFLL), 414–434 (VASQALWALLILVSASYFYVA), and 456–476 (SLVIFLMLFFGANLAYQLIYP). A disulfide bridge links Cys-212 with Cys-334. A Thioredoxin domain is found at 469 to 608 (LAYQLIYPSS…FSAHVKSIFK (140 aa)). A disulfide bond links Cys-522 and Cys-525.

It belongs to the thioredoxin family. DsbD subfamily.

It localises to the cell inner membrane. The catalysed reaction is [protein]-dithiol + NAD(+) = [protein]-disulfide + NADH + H(+). The enzyme catalyses [protein]-dithiol + NADP(+) = [protein]-disulfide + NADPH + H(+). In terms of biological role, required to facilitate the formation of correct disulfide bonds in some periplasmic proteins and for the assembly of the periplasmic c-type cytochromes. Acts by transferring electrons from cytoplasmic thioredoxin to the periplasm. This transfer involves a cascade of disulfide bond formation and reduction steps. The chain is Thiol:disulfide interchange protein DsbD from Colwellia psychrerythraea (strain 34H / ATCC BAA-681) (Vibrio psychroerythus).